The primary structure comprises 199 residues: Single-stranded DNA cytosine deaminase (199 aa).

A Bipartite nuclear localization signal motif is present at residues 1–30; it reads MDSLLKKQRQFLYQFKNVRWAKGRHETYLC. The interaction with SUPT6H stretch occupies residues 2 to 26; it reads DSLLKKQRQFLYQFKNVRWAKGRHE. Positions 23–130 constitute a CMP/dCMP-type deaminase domain; it reads GRHETYLCYV…KAEPEGLRRL (108 aa). Threonine 27 carries the post-translational modification Phosphothreonine; by PKA. The residue at position 38 (serine 38) is a Phosphoserine; by PKA. The segment at 39-42 is important for interaction with CTNNBL1; the sequence is PTSF. Residue histidine 56 coordinates Zn(2+). Residue glutamate 58 is the Proton donor of the active site. Zn(2+)-binding residues include cysteine 87 and cysteine 90. The tract at residues 88–116 is required for interaction with RNF126; the sequence is YDCARHVADFLRGYPNLSLRIFTARLYFC. Positions 184–199 match the Nuclear export signal motif; the sequence is LYEVDDLRDAFRTLGL.

The protein belongs to the cytidine and deoxycytidylate deaminase family. As to quaternary structure, interacts with CTNNBL1; the interaction is important for the immunoglobulin switch activity of AICDA. Interacts (via its NLS) with KPNA1. Interacts with PKA/PRKACA and PRKAR1A/PKR1. Interacts with SUPT6H, TRIM28 and NCL. Directly interacts with MCM3AP; this interaction may favor AICDA recruitment to immunoglobulin variable region genes, hence promoting somatic hypermutations. The cofactor is Zn(2+). Post-translationally, ser-38 is the major site whereas Thr-27 is the minor site of phosphorylation. Phosphorylation regulates its class-switch recombination activity. In terms of processing, probably monoubiquitinated on several residues by RNF126. As to expression, expressed in lymph nodes, spleen and thymus.

It is found in the nucleus. It localises to the cytoplasm. The enzyme catalyses a 2'-deoxycytidine in single-stranded DNA + H2O + H(+) = a 2'-deoxyuridine in single-stranded DNA + NH4(+). Single-stranded DNA-specific cytidine deaminase. Involved in somatic hypermutation (SHM), gene conversion, and class-switch recombination (CSR) in B-lymphocytes by deaminating C to U during transcription of Ig-variable (V) and Ig-switch (S) region DNA. Required for several crucial steps of B-cell terminal differentiation necessary for efficient antibody responses. May also play a role in the epigenetic regulation of gene expression by participating in DNA demethylation. This Bos taurus (Bovine) protein is Single-stranded DNA cytosine deaminase (AICDA).